A 440-amino-acid polypeptide reads, in one-letter code: 2-methylisoborneol synthase (440 aa).

2 disordered regions span residues 1–33 (MPDS…IPSA) and 46–74 (LHPP…TVTG). 2 stretches are compositionally biased toward pro residues: residues 9–29 (TPPP…PAPV) and 50–63 (VTVP…PPAP). The Mg(2+) site is built by Asp197, Asp198, Glu202, Asn345, Ser349, and Glu353.

The protein belongs to the terpene synthase family. 2-methylisoborneol synthase subfamily. It depends on Mg(2+) as a cofactor.

It catalyses the reaction (E)-2-methylgeranyl diphosphate + H2O = 2-methylisoborneol + diphosphate. Its function is as follows. Catalyzes the cyclization of 2-methylgeranyl diphosphate (2-MeGPP) to 2-methylisoborneol (2-MIB), which likely involves the intermediacy of 2-methyllinalyl diphosphate. Is also able to catalyze the cyclization of geranyl diphosphate (GPP), albeit with much lower efficiency, leading to the formation of a complex mixture of cyclic monoterpenes, consisting of alpha-pinene (6%), beta-pinene (23%), limonene (32%), gamma-terpinene (29%), and delta-terpinene (10%). This is 2-methylisoborneol synthase from Streptomyces coelicolor (strain ATCC BAA-471 / A3(2) / M145).